The following is an 87-amino-acid chain: Probable Fe(2+)-trafficking protein (87 aa).

The protein belongs to the Fe(2+)-trafficking protein family.

Functionally, could be a mediator in iron transactions between iron acquisition and iron-requiring processes, such as synthesis and/or repair of Fe-S clusters in biosynthetic enzymes. This is Probable Fe(2+)-trafficking protein from Francisella tularensis subsp. mediasiatica (strain FSC147).